Consider the following 236-residue polypeptide: Small ribosomal subunit protein uS2c (236 aa).

Belongs to the universal ribosomal protein uS2 family.

The protein localises to the plastid. The protein resides in the chloroplast. This chain is Small ribosomal subunit protein uS2c (rps2), found in Calycanthus floridus var. glaucus (Eastern sweetshrub).